Reading from the N-terminus, the 88-residue chain is Putative regulatory protein AM1_5498 (88 aa).

The protein belongs to the RemA family.

The sequence is that of Putative regulatory protein AM1_5498 from Acaryochloris marina (strain MBIC 11017).